A 242-amino-acid chain; its full sequence is Polycomb group RING finger protein 3 (242 aa).

The segment at 17-56 (CRLCSGYLIDATTVTECLHTFCRSCLVKYLEENNTCPTCR) adopts an RING-type zinc-finger fold. The tract at residues 115 to 149 (AKQHLDPHRNGETKADDSSNKEAAEEKQEEDGDYH) is disordered. A compositionally biased stretch (basic and acidic residues) spans 117–140 (QHLDPHRNGETKADDSSNKEAAEE). Positions 132–242 (SSNKEAAEEK…LHYRPKMDLL (111 aa)) are interaction with BCORL1.

As to quaternary structure, component of a PRC1-like complex that contains PCGF3, RNF2 and RYBP. Interacts with CBX6, CBX7 and CBX8. Interacts with BCORL1.

Its subcellular location is the nucleus. It localises to the nucleoplasm. Its function is as follows. Component of a Polycomb group (PcG) multiprotein PRC1-like complex, a complex class required to maintain the transcriptionally repressive state of many genes, including Hox genes, throughout development. PcG PRC1 complex acts via chromatin remodeling and modification of histones; it mediates monoubiquitination of histone H2A 'Lys-119', rendering chromatin heritably changed in its expressibility. Within the PRC1-like complex, regulates RNF2 ubiquitin ligase activity. Plays a redundant role with PCGF5 as part of a PRC1-like complex that mediates monoubiquitination of histone H2A 'Lys-119' on the X chromosome and is required for normal silencing of one copy of the X chromosome in XX females. This chain is Polycomb group RING finger protein 3 (PCGF3), found in Bos taurus (Bovine).